The chain runs to 541 residues: 5' exonuclease Apollo (541 aa).

Residue lysine 334 forms a Glycyl lysine isopeptide (Lys-Gly) (interchain with G-Cter in SUMO2) linkage. A disordered region spans residues 455–475 (PLLSRGDSGSPARGNQSDCVG). A TBM motif is present at residues 492–507 (ESRGLALKYLLTPVHF).

The protein belongs to the DNA repair metallo-beta-lactamase (DRMBL) family. As to quaternary structure, interacts with MUS81, MRE11 and FANCD2. Interacts with HSPA2, HSPA8 and HSPA14. Interacts with SPAG5. Interacts with TERF2; the interaction is direct. In terms of processing, ubiquitinated, leading to its degradation. Interaction with TERF2 protects it from ubiquitination.

Its subcellular location is the chromosome. It is found in the telomere. The protein resides in the nucleus. The protein localises to the cytoplasm. It localises to the cytoskeleton. Its subcellular location is the microtubule organizing center. It is found in the centrosome. The enzyme catalyses a beta-lactam + H2O = a substituted beta-amino acid. In terms of biological role, 5'-3' exonuclease that plays a central role in telomere maintenance and protection during S-phase. Participates in the protection of telomeres against non-homologous end-joining (NHEJ)-mediated repair, thereby ensuring that telomeres do not fuse. Plays a key role in telomeric loop (T loop) formation by being recruited by TERF2 at the leading end telomeres and by processing leading-end telomeres immediately after their replication via its exonuclease activity: generates 3' single-stranded overhang at the leading end telomeres avoiding blunt leading-end telomeres that are vulnerable to end-joining reactions and expose the telomere end in a manner that activates the DNA repair pathways. Together with TERF2, required to protect telomeres from replicative damage during replication by controlling the amount of DNA topoisomerase (TOP1, TOP2A and TOP2B) needed for telomere replication during fork passage and prevent aberrant telomere topology. Also involved in response to DNA damage: plays a role in response to DNA interstrand cross-links (ICLs) by facilitating double-strand break formation. In case of spindle stress, involved in prophase checkpoint. Possesses beta-lactamase activity, catalyzing the hydrolysis of penicillin G and nitrocefin. Exhibits no activity towards other beta-lactam antibiotic classes including cephalosporins (cefotaxime) and carbapenems (imipenem). This Mus musculus (Mouse) protein is 5' exonuclease Apollo (Dclre1b).